A 116-amino-acid chain; its full sequence is Nitrogenase iron-iron protein delta chain (116 aa).

In terms of assembly, hexamer of two alpha, two beta, and two delta chains. It depends on iron-sulfur cluster as a cofactor.

The enzyme catalyses N2 + 8 reduced [2Fe-2S]-[ferredoxin] + 16 ATP + 16 H2O = H2 + 8 oxidized [2Fe-2S]-[ferredoxin] + 2 NH4(+) + 16 ADP + 16 phosphate + 6 H(+). In terms of biological role, the key enzymatic reactions in nitrogen fixation are catalyzed by the nitrogenase complex, which has 2 components: the iron protein (component 2) and a component 1 which is either a molybdenum-iron protein, a vanadium-iron, or an iron-iron protein. In Rhodospirillum rubrum, this protein is Nitrogenase iron-iron protein delta chain (anfG).